The chain runs to 611 residues: MPAYRSRTTTHGRNMAGARGLWRATGMKDGDFGKPIIAVVNSFTQFVPGHVHLKDLGQLVAREIEAAGGVAKEFNTIAVDDGIAMGHDGMLYSLPSREIIADSVEYMVNAHCADAMVCISNCDKITPGMLMASLRLNIPTVFVSGGPMEAGKVVMHGKKVALDLVDAMVAAADDKISDEDVATIERSACPTCGSCSGMFTANSMNCLTEALGLSLPGNGSTLATHSDRKRLFVEAGHLIVDITRRYYEQDDENVLPRNIASKQAFENAMALDIAMGGSTNTVLHILAAAYEGEIDFNLDDIDQLSRRVPCLSKVAPAKQDVHMEDVHRAGGIMRILGELDRGGLINRDCPTVHAPTLGDAIDRWDITRTNSETVREFFRAAPGGVPTQVAFSQSSRWDELDMDRENGVIRSVEKPFSKDGGLAVLKGNIALDGCIVKTAGVDESILKFTGPAKVYESQDSAVKAILSNEVVAGDVVVIRYEGPKGGPGMQEMLYPTSYLKSKGLGKVCALITDGRFSGGTSGLSIGHVSPEAANGGTIGLVRNGDTIAIDIPNRTIELMLSEGELAARRVSQDAAGWKPAEHRKRKVTTALKAYAAFATSADLGAVRKLPE.

Mg(2+) is bound at residue Asp81. Cys122 contributes to the [2Fe-2S] cluster binding site. Asp123 and Lys124 together coordinate Mg(2+). Lys124 is subject to N6-carboxylysine. Cys195 serves as a coordination point for [2Fe-2S] cluster. Glu491 is a binding site for Mg(2+). The active-site Proton acceptor is the Ser517.

The protein belongs to the IlvD/Edd family. In terms of assembly, homodimer. The cofactor is [2Fe-2S] cluster. Mg(2+) serves as cofactor.

It catalyses the reaction (2R)-2,3-dihydroxy-3-methylbutanoate = 3-methyl-2-oxobutanoate + H2O. The enzyme catalyses (2R,3R)-2,3-dihydroxy-3-methylpentanoate = (S)-3-methyl-2-oxopentanoate + H2O. Its pathway is amino-acid biosynthesis; L-isoleucine biosynthesis; L-isoleucine from 2-oxobutanoate: step 3/4. It participates in amino-acid biosynthesis; L-valine biosynthesis; L-valine from pyruvate: step 3/4. Functions in the biosynthesis of branched-chain amino acids. Catalyzes the dehydration of (2R,3R)-2,3-dihydroxy-3-methylpentanoate (2,3-dihydroxy-3-methylvalerate) into 2-oxo-3-methylpentanoate (2-oxo-3-methylvalerate) and of (2R)-2,3-dihydroxy-3-methylbutanoate (2,3-dihydroxyisovalerate) into 2-oxo-3-methylbutanoate (2-oxoisovalerate), the penultimate precursor to L-isoleucine and L-valine, respectively. The sequence is that of Dihydroxy-acid dehydratase from Allorhizobium ampelinum (strain ATCC BAA-846 / DSM 112012 / S4) (Agrobacterium vitis (strain S4)).